Reading from the N-terminus, the 862-residue chain is Leucine--tRNA ligase (862 aa).

The 'HIGH' region signature appears at 42–52 (PYPSGRLHMGH). Residues 622–626 (KMSKS) carry the 'KMSKS' region motif. K625 is a binding site for ATP.

Belongs to the class-I aminoacyl-tRNA synthetase family.

Its subcellular location is the cytoplasm. The catalysed reaction is tRNA(Leu) + L-leucine + ATP = L-leucyl-tRNA(Leu) + AMP + diphosphate. The polypeptide is Leucine--tRNA ligase (Vibrio campbellii (strain ATCC BAA-1116)).